The primary structure comprises 199 residues: Ribonuclease HII (199 aa).

An RNase H type-2 domain is found at 9–198; that stretch reads QFVAGVDEVG…VRAAIEQMNL (190 aa). Aspartate 15, glutamate 16, and aspartate 107 together coordinate a divalent metal cation.

It belongs to the RNase HII family. Mn(2+) serves as cofactor. It depends on Mg(2+) as a cofactor.

It is found in the cytoplasm. It catalyses the reaction Endonucleolytic cleavage to 5'-phosphomonoester.. Endonuclease that specifically degrades the RNA of RNA-DNA hybrids. This Saccharophagus degradans (strain 2-40 / ATCC 43961 / DSM 17024) protein is Ribonuclease HII.